A 265-amino-acid polypeptide reads, in one-letter code: Tryptophan synthase alpha chain (265 aa).

Residues E48 and D59 each act as proton acceptor in the active site.

Belongs to the TrpA family. Tetramer of two alpha and two beta chains.

The enzyme catalyses (1S,2R)-1-C-(indol-3-yl)glycerol 3-phosphate + L-serine = D-glyceraldehyde 3-phosphate + L-tryptophan + H2O. It functions in the pathway amino-acid biosynthesis; L-tryptophan biosynthesis; L-tryptophan from chorismate: step 5/5. Functionally, the alpha subunit is responsible for the aldol cleavage of indoleglycerol phosphate to indole and glyceraldehyde 3-phosphate. The chain is Tryptophan synthase alpha chain from Ruthia magnifica subsp. Calyptogena magnifica.